Here is a 481-residue protein sequence, read N- to C-terminus: Glutamate--tRNA ligase (481 aa).

Positions Pro-28–Gly-38 match the 'HIGH' region motif. Over residues Arg-139–Pro-148 the composition is skewed to basic and acidic residues. A disordered region spans residues Arg-139–Arg-159. Residues Lys-260 to Arg-264 carry the 'KMSKS' region motif. Lys-263 contacts ATP.

The protein belongs to the class-I aminoacyl-tRNA synthetase family. Glutamate--tRNA ligase type 1 subfamily. Monomer.

The protein localises to the cytoplasm. The catalysed reaction is tRNA(Glu) + L-glutamate + ATP = L-glutamyl-tRNA(Glu) + AMP + diphosphate. Catalyzes the attachment of glutamate to tRNA(Glu) in a two-step reaction: glutamate is first activated by ATP to form Glu-AMP and then transferred to the acceptor end of tRNA(Glu). The chain is Glutamate--tRNA ligase from Bordetella bronchiseptica (strain ATCC BAA-588 / NCTC 13252 / RB50) (Alcaligenes bronchisepticus).